The sequence spans 516 residues: L-amino-acid oxidase (516 aa).

Residues 1-18 (MNVFFMFSLLFLAALGSC) form the signal peptide. C28 and C189 form a disulfide bridge. FAD is bound by residues 61 to 62 (MS), 81 to 82 (EA), R89, and 103 to 106 (GPMR). R106 and H239 together coordinate substrate. V279 is an FAD binding site. A disulfide bridge links C349 with C430. Residue N379 is glycosylated (N-linked (GlcNAc...) asparagine). Residue Y390 participates in substrate binding. FAD is bound by residues E475 and 482 to 487 (GWIDST). 482–483 (GW) is a substrate binding site.

Belongs to the flavin monoamine oxidase family. FIG1 subfamily. Homodimer; non-covalently linked. It depends on FAD as a cofactor. Post-translationally, N-glycosylated. As to expression, expressed by the venom gland.

The protein resides in the secreted. It carries out the reaction an L-alpha-amino acid + O2 + H2O = a 2-oxocarboxylate + H2O2 + NH4(+). Its function is as follows. Catalyzes an oxidative deamination of predominantly hydrophobic and aromatic L-amino acids, thus producing hydrogen peroxide that may contribute to the diverse toxic effects of this enzyme. Exhibits diverse biological activities, such as hemorrhage, hemolysis, edema, apoptosis of vascular endothelial cells or tumor cell lines, antibacterial and antiparasitic activities, as well as regulation of platelet aggregation. Effects of snake L-amino oxidases on platelets are controversial, since they either induce aggregation or inhibit agonist-induced aggregation. These different effects are probably due to different experimental conditions. The protein is L-amino-acid oxidase of Sistrurus catenatus edwardsii (Desert massasauga).